Here is a 506-residue protein sequence, read N- to C-terminus: Tubby protein homolog (506 aa).

The segment at 36-244 (QKQKKKRQEP…PSPTAPEQPV (209 aa)) is disordered. 2 stretches are compositionally biased toward low complexity: residues 70-87 (LVESYLSSSGSTSYQVQE) and 101-116 (PTAPASAKRTKAAATA). The segment covering 196–206 (FDEDEEDEEEN) has biased composition (acidic residues). 2 stretches are compositionally biased toward low complexity: residues 207–221 (SSSSSQLNSNTRPSS) and 230–243 (EAASAPSPTAPEQP).

Belongs to the TUB family. In terms of assembly, interacts with GNAQ. Interacts with TULP1.

Its subcellular location is the cytoplasm. It is found in the nucleus. It localises to the secreted. The protein localises to the cell membrane. Its function is as follows. Functions in signal transduction from heterotrimeric G protein-coupled receptors. Binds to membranes containing phosphatidylinositol 4,5-bisphosphate. Can bind DNA (in vitro). May contribute to the regulation of transcription in the nucleus. Could be involved in the hypothalamic regulation of body weight. Contribute to stimulation of phagocytosis of apoptotic retinal pigment epithelium (RPE) cells and macrophages. The sequence is that of Tubby protein homolog (TUB) from Homo sapiens (Human).